Reading from the N-terminus, the 550-residue chain is uncharacterized protein (550 aa).

The first 53 residues, 1–53 (MVVIANKGALWAYYCKRLLNSVTYMMYPLIRKRTMKKLLLIVGLLLACSTVMR), serve as a signal peptide directing secretion. N-linked (GlcNAc...) asparagine glycans are attached at residues asparagine 296 and asparagine 518.

It is found in the endoplasmic reticulum. This is an uncharacterized protein from Schizosaccharomyces pombe (strain 972 / ATCC 24843) (Fission yeast).